The primary structure comprises 247 residues: Zinc finger protein YPR015C (247 aa).

2 C2H2-type zinc fingers span residues Lys-185–His-207 and Phe-213–His-237.

This chain is Zinc finger protein YPR015C, found in Saccharomyces cerevisiae (strain ATCC 204508 / S288c) (Baker's yeast).